A 443-amino-acid chain; its full sequence is Xaa-Pro dipeptidase (443 aa).

Aspartate 244, aspartate 255, histidine 336, glutamate 381, and glutamate 420 together coordinate Mn(2+).

The protein belongs to the peptidase M24B family. Bacterial-type prolidase subfamily. Mn(2+) serves as cofactor.

It catalyses the reaction Xaa-L-Pro dipeptide + H2O = an L-alpha-amino acid + L-proline. Splits dipeptides with a prolyl residue in the C-terminal position. The protein is Xaa-Pro dipeptidase of Stenotrophomonas maltophilia (strain R551-3).